A 142-amino-acid chain; its full sequence is Large ribosomal subunit protein uL11 (142 aa).

This sequence belongs to the universal ribosomal protein uL11 family. In terms of assembly, part of the ribosomal stalk of the 50S ribosomal subunit. Interacts with L10 and the large rRNA to form the base of the stalk. L10 forms an elongated spine to which L12 dimers bind in a sequential fashion forming a multimeric L10(L12)X complex. Post-translationally, one or more lysine residues are methylated.

Its function is as follows. Forms part of the ribosomal stalk which helps the ribosome interact with GTP-bound translation factors. In Afipia carboxidovorans (strain ATCC 49405 / DSM 1227 / KCTC 32145 / OM5) (Oligotropha carboxidovorans), this protein is Large ribosomal subunit protein uL11.